A 192-amino-acid chain; its full sequence is Putative manganese efflux pump MntP (192 aa).

6 helical membrane-spanning segments follow: residues 2-22, 41-61, 62-82, 109-129, 136-156, and 172-192; these read IAII…AFAV, SALW…YAAS, AFSA…LAFI, MLPL…SLAF, FAIL…LYIG, and GVVL…VIAF.

The protein belongs to the MntP (TC 9.B.29) family.

Its subcellular location is the cell membrane. Functionally, probably functions as a manganese efflux pump. The sequence is that of Putative manganese efflux pump MntP from Bifidobacterium longum subsp. infantis (strain ATCC 15697 / DSM 20088 / JCM 1222 / NCTC 11817 / S12).